Consider the following 467-residue polypeptide: Bifunctional protein GlmU (467 aa).

Positions 1–229 are pyrophosphorylase; that stretch reads MEKNTIILAA…FSESMGVNDR (229 aa). UDP-N-acetyl-alpha-D-glucosamine contacts are provided by residues 8–11, Lys22, Gln72, 77–78, 100–102, Gly139, Glu154, Asn169, and Asn227; these read LAAG, GT, and SGD. Asp102 contributes to the Mg(2+) binding site. Asn227 contacts Mg(2+). The interval 230–250 is linker; sequence LALSKATKVMQRRINEEHMVN. The tract at residues 251 to 467 is N-acetyltransferase; the sequence is GVTIIDPENT…ALKAEEENNK (217 aa). Residues Arg332 and Lys350 each contribute to the UDP-N-acetyl-alpha-D-glucosamine site. The active-site Proton acceptor is the His362. 2 residues coordinate UDP-N-acetyl-alpha-D-glucosamine: Tyr365 and Asn376. Acetyl-CoA is bound by residues 385–386, Ser404, Ala422, and Arg439; that span reads NY.

In the N-terminal section; belongs to the N-acetylglucosamine-1-phosphate uridyltransferase family. The protein in the C-terminal section; belongs to the transferase hexapeptide repeat family. As to quaternary structure, homotrimer. The cofactor is Mg(2+).

It is found in the cytoplasm. The catalysed reaction is alpha-D-glucosamine 1-phosphate + acetyl-CoA = N-acetyl-alpha-D-glucosamine 1-phosphate + CoA + H(+). The enzyme catalyses N-acetyl-alpha-D-glucosamine 1-phosphate + UTP + H(+) = UDP-N-acetyl-alpha-D-glucosamine + diphosphate. The protein operates within nucleotide-sugar biosynthesis; UDP-N-acetyl-alpha-D-glucosamine biosynthesis; N-acetyl-alpha-D-glucosamine 1-phosphate from alpha-D-glucosamine 6-phosphate (route II): step 2/2. It participates in nucleotide-sugar biosynthesis; UDP-N-acetyl-alpha-D-glucosamine biosynthesis; UDP-N-acetyl-alpha-D-glucosamine from N-acetyl-alpha-D-glucosamine 1-phosphate: step 1/1. It functions in the pathway bacterial outer membrane biogenesis; LPS lipid A biosynthesis. Functionally, catalyzes the last two sequential reactions in the de novo biosynthetic pathway for UDP-N-acetylglucosamine (UDP-GlcNAc). The C-terminal domain catalyzes the transfer of acetyl group from acetyl coenzyme A to glucosamine-1-phosphate (GlcN-1-P) to produce N-acetylglucosamine-1-phosphate (GlcNAc-1-P), which is converted into UDP-GlcNAc by the transfer of uridine 5-monophosphate (from uridine 5-triphosphate), a reaction catalyzed by the N-terminal domain. This is Bifunctional protein GlmU from Pediococcus pentosaceus (strain ATCC 25745 / CCUG 21536 / LMG 10740 / 183-1w).